A 317-amino-acid chain; its full sequence is Flagellar hook-associated protein 3 (317 aa).

It belongs to the bacterial flagellin family.

It localises to the secreted. It is found in the bacterial flagellum. This is Flagellar hook-associated protein 3 (flgL) from Salmonella typhimurium (strain LT2 / SGSC1412 / ATCC 700720).